A 720-amino-acid polypeptide reads, in one-letter code: Long chain acyl-CoA synthetase 8 (720 aa).

At Met-1 the chain carries N-acetylmethionine. Residue 279-290 coordinates ATP; that stretch reads IMFTSGSTGLPK. A fatty acid-binding region spans residues 554–582; the sequence is DEKGTRWFYTGDIGRFHPDGCLEVIDRKK.

This sequence belongs to the ATP-dependent AMP-binding enzyme family. Requires Mg(2+) as cofactor.

It carries out the reaction a long-chain fatty acid + ATP + CoA = a long-chain fatty acyl-CoA + AMP + diphosphate. It functions in the pathway lipid metabolism; fatty acid metabolism. In terms of biological role, activation of long-chain fatty acids for both synthesis of cellular lipids, and degradation via beta-oxidation. Preferentially uses palmitate, palmitoleate, oleate and linoleate. This chain is Long chain acyl-CoA synthetase 8 (LACS8), found in Arabidopsis thaliana (Mouse-ear cress).